We begin with the raw amino-acid sequence, 256 residues long: 3-methyl-2-oxobutanoate hydroxymethyltransferase (256 aa).

Positions 42 and 86 each coordinate Mg(2+). Residues D42–S43, D86, and K116 contribute to the 3-methyl-2-oxobutanoate site. E118 contributes to the Mg(2+) binding site. E185 (proton acceptor) is an active-site residue.

Belongs to the PanB family. As to quaternary structure, homodecamer; pentamer of dimers. Mg(2+) serves as cofactor.

The protein resides in the cytoplasm. The enzyme catalyses 3-methyl-2-oxobutanoate + (6R)-5,10-methylene-5,6,7,8-tetrahydrofolate + H2O = 2-dehydropantoate + (6S)-5,6,7,8-tetrahydrofolate. The protein operates within cofactor biosynthesis; (R)-pantothenate biosynthesis; (R)-pantoate from 3-methyl-2-oxobutanoate: step 1/2. Catalyzes the reversible reaction in which hydroxymethyl group from 5,10-methylenetetrahydrofolate is transferred onto alpha-ketoisovalerate to form ketopantoate. The chain is 3-methyl-2-oxobutanoate hydroxymethyltransferase from Prochlorococcus marinus (strain SARG / CCMP1375 / SS120).